Consider the following 1415-residue polypeptide: Zygote defective protein 9 (1415 aa).

TOG stretches follow at residues 1-250 (MSNW…AKNA) and 251-530 (PPVA…AGPA). The stretch at 21–48 (DELRESKKWQERKEALEALLKVLTDNER) forms a coiled coil. 4 HEAT repeats span residues 30-68 (QERK…VLAK), 95-132 (SFAG…TMQS), 135-172 (TGQE…AKQP), and 179-217 (VVPV…VKNL). A disordered region spans residues 243–278 (AEEQAKNAPPVAPTSSTPSASAASGDPSGGTATAVV). The span at 255–276 (PTSSTPSASAASGDPSGGTATA) shows a compositional bias: low complexity. HEAT repeat units lie at residues 339–377 (ANYG…GLRT), 381–418 (PFAV…TTNL), 420–457 (AVGE…QTMP), and 464–502 (LIPS…SLQL). A disordered region spans residues 544–603 (APPAAAPPKKTAPPKKQPEDEEVVEEEDEPLKPPPGDKKKKVPVKENEENEPPVVAPKAE). Over residues 562–572 (EDEEVVEEEDE) the composition is skewed to acidic residues. The interval 602–867 (AELLLSDNED…VEERIKRTGV (266 aa)) is TOG 3. HEAT repeat units lie at residues 706–743 (IKVL…LKTG), 764–801 (VGPL…NAGI), and 804–841 (LKSL…FEGD). A disordered region spans residues 867–914 (VKPGSGVVTSPPTGGPKILVPQQQGSVVRRPASRSRTREPEPEEVQSD).

It belongs to the TOG/XMAP215 family. As to quaternary structure, interacts with tac-1 to form a heterodimer.

It localises to the cytoplasm. The protein resides in the cytoskeleton. Its subcellular location is the spindle pole. The protein localises to the microtubule organizing center. It is found in the centrosome. Plays a major role in organizing microtubules and spindle poles during mitosis and meiosis in one-cell stage embryos. Required for default nucleus positioning in oocytes. This is Zygote defective protein 9 from Caenorhabditis elegans.